The following is a 421-amino-acid chain: Ameloblastin (421 aa).

Residues 1-26 form the signal peptide; it reads MPALKIPLFKMKDMVLILCLLKMSSA. Residue Pro37 is modified to Hydroxyproline. Residue Ser43 is modified to Phosphoserine. 3 disordered regions span residues 104 to 126, 264 to 311, and 333 to 421; these read PVHP…QKPF, GGMP…ADPE, and GKIP…FQEP. Residue Ser112 is glycosylated (O-linked (GalNAc...) serine). Residues 113-125 show a composition bias toward low complexity; sequence QPSLQPQQPGQKP. The segment covering 339–350 has biased composition (low complexity); that stretch reads ARGPAGRSRGPP. Positions 388 to 410 are enriched in polar residues; the sequence is MDSTATPYSEHTSMPGNKAQQPQ. A compositionally biased stretch (basic and acidic residues) spans 411–421; the sequence is IKRDAWRFQEP.

This sequence belongs to the ameloblastin family. As to expression, ameloblast-specific. Located at the Tomes processes of secretory ameloblasts and in the sheath space between rod-interrod enamel.

It localises to the secreted. It is found in the extracellular space. The protein resides in the extracellular matrix. Functionally, involved in the mineralization and structural organization of enamel. This is Ameloblastin (AMBN) from Sus scrofa (Pig).